A 188-amino-acid polypeptide reads, in one-letter code: MRRNKRERQELLQQTIQATPFITDEELAGKFGVSIQTIRLDRLELSIPELRERIKNVAEKTLEDEVKSLSLDEVIGEIIDLELDDQAISILEIKQEHVFSRNQIARGHHLFAQANSLAVAVIDDELALTASADIRFTRQVKQGERVVAKAKVTAVEKEKGRTVVEVNSYVGEEIVFSGRFDMYRSKHS.

It belongs to the FapR family.

Its function is as follows. Transcription factor involved in regulation of membrane lipid biosynthesis by repressing genes involved in fatty acid and phospholipid metabolism. Binds to the 5'-TTAGTANNNNNTANTAA-3' consensus sequence found in the promoter of fabHAF operon (containing fabHA and fabF genes), yhdO and fapR genes and prevents their expression. Its action is probably modulated by malonyl-CoA. In Bacillus subtilis (strain 168), this protein is Transcription factor FapR (fapR).